The primary structure comprises 293 residues: Glycine--tRNA ligase alpha subunit (293 aa).

The protein belongs to the class-II aminoacyl-tRNA synthetase family. Tetramer of two alpha and two beta subunits.

The protein resides in the cytoplasm. It carries out the reaction tRNA(Gly) + glycine + ATP = glycyl-tRNA(Gly) + AMP + diphosphate. The protein is Glycine--tRNA ligase alpha subunit of Aliarcobacter butzleri (strain RM4018) (Arcobacter butzleri).